The chain runs to 543 residues: Cytochrome P450 307a1 (543 aa).

A Phosphoserine modification is found at serine 219. The segment at 440 to 460 (FLEPSKEQSPKNSKGSDSGIE) is disordered. The segment covering 449 to 460 (PKNSKGSDSGIE) has biased composition (polar residues). Cysteine 485 lines the heme pocket.

The protein belongs to the cytochrome P450 family. The cofactor is heme.

It localises to the endoplasmic reticulum membrane. The protein localises to the microsome membrane. In terms of biological role, required for correct development of the embryonic midline glial cells which are necessary for the formation of distinct segmental commissures. The chain is Cytochrome P450 307a1 (spo) from Drosophila melanogaster (Fruit fly).